A 73-amino-acid chain; its full sequence is Defensin-like protein 87 (73 aa).

The first 27 residues, 1-27, serve as a signal peptide directing secretion; sequence MTTKKTSSVVLPLLLVFALILMPMVAG. 3 disulfides stabilise this stretch: Cys-33–Cys-71, Cys-45–Cys-69, and Cys-49–Cys-70.

The protein belongs to the DEFL family.

It is found in the secreted. The polypeptide is Defensin-like protein 87 (Arabidopsis thaliana (Mouse-ear cress)).